Reading from the N-terminus, the 150-residue chain is Cytochrome c oxidase subunit 5A, mitochondrial (150 aa).

A mitochondrion-targeting transit peptide spans 1 to 41; that stretch reads MLGAALRRCAVAATSRAGPRGLLHSAPNPGPAAAIQSVRCY. Residues 2-17 carry the SIFI-degron motif; it reads LGAALRRCAVAATSRA. Residues Lys-87 and Lys-113 each carry the N6-acetyllysine modification. Thr-141 is subject to Phosphothreonine.

Belongs to the cytochrome c oxidase subunit 5A family. As to quaternary structure, component of the cytochrome c oxidase (complex IV, CIV), a multisubunit enzyme composed of 14 subunits. The complex is composed of a catalytic core of 3 subunits MT-CO1, MT-CO2 and MT-CO3, encoded in the mitochondrial DNA, and 11 supernumerary subunits COX4I, COX5A, COX5B, COX6A, COX6B, COX6C, COX7A, COX7B, COX7C, COX8 and NDUFA4, which are encoded in the nuclear genome. The complex exists as a monomer or a dimer and forms supercomplexes (SCs) in the inner mitochondrial membrane with NADH-ubiquinone oxidoreductase (complex I, CI) and ubiquinol-cytochrome c oxidoreductase (cytochrome b-c1 complex, complex III, CIII), resulting in different assemblies (supercomplex SCI(1)III(2)IV(1) and megacomplex MCI(2)III(2)IV(2)). Interacts with AFG1L. Interacts with RAB5IF. Post-translationally, in response to mitochondrial stress, the precursor protein is ubiquitinated by the SIFI complex in the cytoplasm before mitochondrial import, leading to its degradation. Within the SIFI complex, UBR4 initiates ubiquitin chain that are further elongated or branched by KCMF1.

It localises to the mitochondrion inner membrane. It functions in the pathway energy metabolism; oxidative phosphorylation. Component of the cytochrome c oxidase, the last enzyme in the mitochondrial electron transport chain which drives oxidative phosphorylation. The respiratory chain contains 3 multisubunit complexes succinate dehydrogenase (complex II, CII), ubiquinol-cytochrome c oxidoreductase (cytochrome b-c1 complex, complex III, CIII) and cytochrome c oxidase (complex IV, CIV), that cooperate to transfer electrons derived from NADH and succinate to molecular oxygen, creating an electrochemical gradient over the inner membrane that drives transmembrane transport and the ATP synthase. Cytochrome c oxidase is the component of the respiratory chain that catalyzes the reduction of oxygen to water. Electrons originating from reduced cytochrome c in the intermembrane space (IMS) are transferred via the dinuclear copper A center (CU(A)) of subunit 2 and heme A of subunit 1 to the active site in subunit 1, a binuclear center (BNC) formed by heme A3 and copper B (CU(B)). The BNC reduces molecular oxygen to 2 water molecules using 4 electrons from cytochrome c in the IMS and 4 protons from the mitochondrial matrix. The protein is Cytochrome c oxidase subunit 5A, mitochondrial (COX5A) of Saguinus labiatus (Red-chested mustached tamarin).